The chain runs to 421 residues: Medium-chain specific acyl-CoA dehydrogenase, mitochondrial (421 aa).

Residues 1–25 constitute a mitochondrion transit peptide; it reads MAAGFGRCCRVLRSISRFHWRSQHT. K69 bears the N6-acetyllysine; alternate mark. K69 is modified (N6-succinyllysine; alternate). Residue 158–167 coordinates FAD; the sequence is YCVTEPGAGS. Residue S167 coordinates octanoyl-CoA. K179 is modified (N6-succinyllysine). 191-193 serves as a coordination point for FAD; that stretch reads WIT. Residues K212, K217, K259, and K271 each carry the N6-acetyllysine; alternate modification. K212, K217, K259, and K271 each carry N6-succinyllysine; alternate. D278 serves as a coordination point for octanoyl-CoA. An N6-acetyllysine modification is found at K279. R281 is a binding site for octanoyl-CoA. The residue at position 301 (K301) is an N6-acetyllysine. FAD contacts are provided by residues 306–308 and 316–317; these read RKT and HQ. T351 is subject to Phosphothreonine. FAD-binding positions include 374-378 and 401-405; these read QILGG and EGTSQ. E401 is a binding site for octanoyl-CoA. E401 functions as the Proton acceptor in the catalytic mechanism.

It belongs to the acyl-CoA dehydrogenase family. Homotetramer. Interacts with the heterodimeric electron transfer flavoprotein ETF. FAD is required as a cofactor. In terms of processing, acetylated. Could occur at proximity of the cofactor-binding sites and reduce the catalytic activity. Could be deacetylated by SIRT3.

It localises to the mitochondrion matrix. The enzyme catalyses a medium-chain 2,3-saturated fatty acyl-CoA + oxidized [electron-transfer flavoprotein] + H(+) = a medium-chain (2E)-enoyl-CoA + reduced [electron-transfer flavoprotein]. It carries out the reaction pentanoyl-CoA + oxidized [electron-transfer flavoprotein] + H(+) = (2E)-pentenoyl-CoA + reduced [electron-transfer flavoprotein]. The catalysed reaction is hexanoyl-CoA + oxidized [electron-transfer flavoprotein] + H(+) = (2E)-hexenoyl-CoA + reduced [electron-transfer flavoprotein]. It catalyses the reaction octanoyl-CoA + oxidized [electron-transfer flavoprotein] + H(+) = (2E)-octenoyl-CoA + reduced [electron-transfer flavoprotein]. The enzyme catalyses decanoyl-CoA + oxidized [electron-transfer flavoprotein] + H(+) = (2E)-decenoyl-CoA + reduced [electron-transfer flavoprotein]. It carries out the reaction dodecanoyl-CoA + oxidized [electron-transfer flavoprotein] + H(+) = (2E)-dodecenoyl-CoA + reduced [electron-transfer flavoprotein]. The catalysed reaction is tetradecanoyl-CoA + oxidized [electron-transfer flavoprotein] + H(+) = (2E)-tetradecenoyl-CoA + reduced [electron-transfer flavoprotein]. It catalyses the reaction oxidized [electron-transfer flavoprotein] + hexadecanoyl-CoA + H(+) = (2E)-hexadecenoyl-CoA + reduced [electron-transfer flavoprotein]. Its pathway is lipid metabolism; mitochondrial fatty acid beta-oxidation. Functionally, medium-chain specific acyl-CoA dehydrogenase is one of the acyl-CoA dehydrogenases that catalyze the first step of mitochondrial fatty acid beta-oxidation, an aerobic process breaking down fatty acids into acetyl-CoA and allowing the production of energy from fats. The first step of fatty acid beta-oxidation consists in the removal of one hydrogen from C-2 and C-3 of the straight-chain fatty acyl-CoA thioester, resulting in the formation of trans-2-enoyl-CoA. Electron transfer flavoprotein (ETF) is the electron acceptor that transfers electrons to the main mitochondrial respiratory chain via ETF-ubiquinone oxidoreductase (ETF dehydrogenase). Among the different mitochondrial acyl-CoA dehydrogenases, medium-chain specific acyl-CoA dehydrogenase acts specifically on acyl-CoAs with saturated 6 to 12 carbons long primary chains. The protein is Medium-chain specific acyl-CoA dehydrogenase, mitochondrial of Homo sapiens (Human).